The chain runs to 108 residues: Nucleoid-associated protein BMASAVP1_A1850 (108 aa).

Positions 84–108 (EATSQEKMSGMTSGLPLPPGFKLPF) are disordered. A compositionally biased stretch (polar residues) spans 85 to 95 (ATSQEKMSGMT). Residues 99-108 (PLPPGFKLPF) are compositionally biased toward pro residues.

The protein belongs to the YbaB/EbfC family. Homodimer.

It localises to the cytoplasm. The protein localises to the nucleoid. In terms of biological role, binds to DNA and alters its conformation. May be involved in regulation of gene expression, nucleoid organization and DNA protection. This Burkholderia mallei (strain SAVP1) protein is Nucleoid-associated protein BMASAVP1_A1850.